The chain runs to 101 residues: Large ribosomal subunit protein uL23 (101 aa).

It belongs to the universal ribosomal protein uL23 family. Part of the 50S ribosomal subunit. Contacts protein L29, and trigger factor when it is bound to the ribosome.

Functionally, one of the early assembly proteins it binds 23S rRNA. One of the proteins that surrounds the polypeptide exit tunnel on the outside of the ribosome. Forms the main docking site for trigger factor binding to the ribosome. The protein is Large ribosomal subunit protein uL23 of Histophilus somni (strain 129Pt) (Haemophilus somnus).